The following is a 246-amino-acid chain: Bis(5'-nucleosyl)-tetraphosphatase PrpE [asymmetrical] (246 aa).

This sequence belongs to the PrpE family. The cofactor is Ni(2+).

It catalyses the reaction P(1),P(4)-bis(5'-guanosyl) tetraphosphate + H2O = GMP + GTP + 2 H(+). Functionally, asymmetrically hydrolyzes Ap4p to yield AMP and ATP. The protein is Bis(5'-nucleosyl)-tetraphosphatase PrpE [asymmetrical] of Bacillus mycoides (strain KBAB4) (Bacillus weihenstephanensis).